Reading from the N-terminus, the 247-residue chain is Large ribosomal subunit protein uL24m (247 aa).

The KOW domain occupies 84-117 (FFRGDRIEVLVGKDKGKQGIVTQVIPERNWVIVE).

The protein belongs to the universal ribosomal protein uL24 family. As to quaternary structure, component of the mitochondrial ribosome large subunit (39S) which comprises a 16S rRNA and about 50 distinct proteins.

The protein localises to the mitochondrion. In Drosophila pseudoobscura pseudoobscura (Fruit fly), this protein is Large ribosomal subunit protein uL24m (mRpL24).